The sequence spans 76 residues: Defensin-like protein 122 (76 aa).

An N-terminal signal peptide occupies residues 1 to 25; the sequence is MSKTTVIAIFMVVLVLGLVTKETQG. 4 disulfides stabilise this stretch: cysteine 29-cysteine 74, cysteine 39-cysteine 60, cysteine 44-cysteine 68, and cysteine 48-cysteine 70.

It belongs to the DEFL family. In terms of tissue distribution, expressed in flower buds, but not in stems, roots or rosette leaves.

The protein localises to the secreted. The protein is Defensin-like protein 122 (LCR30) of Arabidopsis thaliana (Mouse-ear cress).